The primary structure comprises 387 residues: Exodeoxyribonuclease 7 large subunit (387 aa).

It belongs to the XseA family. In terms of assembly, heterooligomer composed of large and small subunits.

It localises to the cytoplasm. The catalysed reaction is Exonucleolytic cleavage in either 5'- to 3'- or 3'- to 5'-direction to yield nucleoside 5'-phosphates.. Bidirectionally degrades single-stranded DNA into large acid-insoluble oligonucleotides, which are then degraded further into small acid-soluble oligonucleotides. This Campylobacter jejuni subsp. jejuni serotype O:6 (strain 81116 / NCTC 11828) protein is Exodeoxyribonuclease 7 large subunit.